A 206-amino-acid chain; its full sequence is Large ribosomal subunit protein mL40 (206 aa).

The N-terminal 46 residues, 1-46 (MATGVMLCAARALRPRSWIPGTCQAHVRHTHQRASLLAFWDLIPMR), are a transit peptide targeting the mitochondrion. The interval 170–189 (PFEKEGPHYTPPISNYQAPE) is disordered.

Belongs to the mitochondrion-specific ribosomal protein mL40 family. Component of the mitochondrial ribosome large subunit (39S) which comprises a 16S rRNA and about 50 distinct proteins. As to expression, ubiquitous.

The protein localises to the mitochondrion. This chain is Large ribosomal subunit protein mL40 (Mrpl40), found in Mus musculus (Mouse).